The following is a 480-amino-acid chain: Aspartyl/glutamyl-tRNA(Asn/Gln) amidotransferase subunit B (480 aa).

This sequence belongs to the GatB/GatE family. GatB subfamily. In terms of assembly, heterotrimer of A, B and C subunits.

It carries out the reaction L-glutamyl-tRNA(Gln) + L-glutamine + ATP + H2O = L-glutaminyl-tRNA(Gln) + L-glutamate + ADP + phosphate + H(+). It catalyses the reaction L-aspartyl-tRNA(Asn) + L-glutamine + ATP + H2O = L-asparaginyl-tRNA(Asn) + L-glutamate + ADP + phosphate + 2 H(+). Functionally, allows the formation of correctly charged Asn-tRNA(Asn) or Gln-tRNA(Gln) through the transamidation of misacylated Asp-tRNA(Asn) or Glu-tRNA(Gln) in organisms which lack either or both of asparaginyl-tRNA or glutaminyl-tRNA synthetases. The reaction takes place in the presence of glutamine and ATP through an activated phospho-Asp-tRNA(Asn) or phospho-Glu-tRNA(Gln). The protein is Aspartyl/glutamyl-tRNA(Asn/Gln) amidotransferase subunit B of Streptococcus agalactiae serotype Ia (strain ATCC 27591 / A909 / CDC SS700).